Reading from the N-terminus, the 318-residue chain is Protein-methionine-sulfoxide reductase catalytic subunit MsrP (318 aa).

The tat-type signal signal peptide spans 1 to 40; sequence MKQLMMSDVTPEEIFNQRRQIIKSMGLGIATLGLPNIAFA. Mo-molybdopterin-binding positions include asparagine 72, 75-76, cysteine 130, threonine 165, asparagine 217, arginine 222, and 233-235; these read YE and SIK.

The protein belongs to the MsrP family. As to quaternary structure, heterodimer of a catalytic subunit (MsrP) and a heme-binding subunit (MsrQ). Mo-molybdopterin is required as a cofactor. Post-translationally, predicted to be exported by the Tat system. The position of the signal peptide cleavage has not been experimentally proven.

The protein resides in the periplasm. The enzyme catalyses L-methionyl-[protein] + a quinone + H2O = L-methionyl-(S)-S-oxide-[protein] + a quinol. It carries out the reaction L-methionyl-[protein] + a quinone + H2O = L-methionyl-(R)-S-oxide-[protein] + a quinol. Part of the MsrPQ system that repairs oxidized periplasmic proteins containing methionine sulfoxide residues (Met-O), using respiratory chain electrons. Thus protects these proteins from oxidative-stress damage caused by reactive species of oxygen and chlorine generated by the host defense mechanisms. MsrPQ is essential for the maintenance of envelope integrity under bleach stress, rescuing a wide series of structurally unrelated periplasmic proteins from methionine oxidation. The catalytic subunit MsrP is non-stereospecific, being able to reduce both (R-) and (S-) diastereoisomers of methionine sulfoxide. The polypeptide is Protein-methionine-sulfoxide reductase catalytic subunit MsrP (Haemophilus ducreyi (strain 35000HP / ATCC 700724)).